A 391-amino-acid polypeptide reads, in one-letter code: L-tryptophan--pyruvate aminotransferase 1 (391 aa).

Residues tyrosine 58, 100 to 101, asparagine 168, 191 to 194, 214 to 217, and arginine 225 each bind pyridoxal 5'-phosphate; these read ST, DFAY, and TFSK. Residue lysine 217 is modified to N6-(pyridoxal phosphate)lysine.

It belongs to the alliinase family. The cofactor is pyridoxal 5'-phosphate. Expressed at the leaf margin and in the vasculature of emerging young leaves. Expressed in the quiescent center and in the vasculature of root tips. Detected in the shoot apical meristem, stems, sepals, stamen filaments, the shoot and root junction, the stigma and the base of the silique.

Its subcellular location is the cytoplasm. It catalyses the reaction L-tryptophan + 2-oxoglutarate = indole-3-pyruvate + L-glutamate. It carries out the reaction L-tryptophan + pyruvate = indole-3-pyruvate + L-alanine. It functions in the pathway plant hormone metabolism; auxin biosynthesis. Inhibited by L-kynurenine. Functionally, L-tryptophan aminotransferase involved in auxin (IAA) biosynthesis. Can convert L-tryptophan and pyruvate to indole-3-pyruvic acid (IPA) and alanine. Catalyzes the first step in IPA branch of the auxin biosynthetic pathway. Required for auxin production to initiate multiple change in growth in response to environmental and developmental cues. It is also active with phenylalanine, tyrosine, leucine, alanine, methionine and glutamine. Both TAA1 and TAR2 are required for maintaining proper auxin levels in roots, while TAA1, TAR1 and TAR2 are required for proper embryo patterning. Involved in the maintenance of the root stem cell niches and required for shade avoidance. This Arabidopsis thaliana (Mouse-ear cress) protein is L-tryptophan--pyruvate aminotransferase 1 (TAA1).